Consider the following 892-residue polypeptide: Alanine--tRNA ligase (892 aa).

4 residues coordinate Zn(2+): histidine 594, histidine 598, cysteine 702, and histidine 706.

The protein belongs to the class-II aminoacyl-tRNA synthetase family. The cofactor is Zn(2+).

The protein resides in the cytoplasm. The catalysed reaction is tRNA(Ala) + L-alanine + ATP = L-alanyl-tRNA(Ala) + AMP + diphosphate. Its function is as follows. Catalyzes the attachment of alanine to tRNA(Ala) in a two-step reaction: alanine is first activated by ATP to form Ala-AMP and then transferred to the acceptor end of tRNA(Ala). Also edits incorrectly charged Ser-tRNA(Ala) and Gly-tRNA(Ala) via its editing domain. In Pyrobaculum neutrophilum (strain DSM 2338 / JCM 9278 / NBRC 100436 / V24Sta) (Thermoproteus neutrophilus), this protein is Alanine--tRNA ligase.